The sequence spans 341 residues: tRNA N6-adenosine threonylcarbamoyltransferase (341 aa).

Fe cation contacts are provided by histidine 115 and histidine 119. Substrate is bound by residues 138–142 (LVSGG), aspartate 171, glycine 184, and asparagine 276. A Fe cation-binding site is contributed by aspartate 304.

Belongs to the KAE1 / TsaD family. Fe(2+) serves as cofactor.

It localises to the cytoplasm. It carries out the reaction L-threonylcarbamoyladenylate + adenosine(37) in tRNA = N(6)-L-threonylcarbamoyladenosine(37) in tRNA + AMP + H(+). Required for the formation of a threonylcarbamoyl group on adenosine at position 37 (t(6)A37) in tRNAs that read codons beginning with adenine. Is involved in the transfer of the threonylcarbamoyl moiety of threonylcarbamoyl-AMP (TC-AMP) to the N6 group of A37, together with TsaE and TsaB. TsaD likely plays a direct catalytic role in this reaction. The chain is tRNA N6-adenosine threonylcarbamoyltransferase from Stenotrophomonas maltophilia (strain R551-3).